Here is a 454-residue protein sequence, read N- to C-terminus: Dihydrolipoyllysine-residue succinyltransferase component of 2-oxoglutarate dehydrogenase complex, mitochondrial (454 aa).

Residues 1–68 (MLSRSRCVSR…RFFQTTAVCK (68 aa)) constitute a mitochondrion transit peptide. The region spanning 71–145 (VITVQTPAFA…EGGTPLFTLR (75 aa)) is the Lipoyl-binding domain. The residue at position 82 (S82) is a Phosphoserine. Position 111 is an N6-lipoyllysine (K111). The interval 147 to 227 (TGAAPAKAKP…KGLRSEHREK (81 aa)) is disordered. Residues 149-163 (AAPAKAKPAETPAPA) show a composition bias toward low complexity. K155 carries the post-translational modification N6-acetyllysine. Over residues 186–197 (PPVPSPSQPPSS) the composition is skewed to pro residues. Positions 198 to 217 (KPVSAIKPTAAPPLAEAGAA) are enriched in low complexity. 5 positions are modified to N6-acetyllysine: K268, K273, K274, K278, and K308. Catalysis depends on residues H425 and D429.

It belongs to the 2-oxoacid dehydrogenase family. In terms of assembly, the 2-oxoglutarate dehydrogenase complex is composed of OGDH (2-oxoglutarate dehydrogenase; E1), DLST (dihydrolipoamide succinyltransferase; E2), DLD (dihydrolipoamide dehydrogenase; E3) and the assembly factor KGD4. It contains multiple copies of the three enzymatic components (E1, E2 and E3). In the nucleus, the 2-oxoglutarate dehydrogenase complex associates with KAT2A. Interacts with ABHD11; this interaction maintains the functional lipoylation of the 2-oxoglutarate dehydrogenase complex. (R)-lipoate serves as cofactor.

It is found in the mitochondrion matrix. The protein localises to the nucleus. It carries out the reaction N(6)-[(R)-dihydrolipoyl]-L-lysyl-[protein] + succinyl-CoA = N(6)-[(R)-S(8)-succinyldihydrolipoyl]-L-lysyl-[protein] + CoA. Its pathway is amino-acid degradation; L-lysine degradation via saccharopine pathway; glutaryl-CoA from L-lysine: step 6/6. It participates in carbohydrate metabolism; tricarboxylic acid cycle. In terms of biological role, dihydrolipoamide succinyltransferase (E2) component of the 2-oxoglutarate dehydrogenase complex. The 2-oxoglutarate dehydrogenase complex catalyzes the overall conversion of 2-oxoglutarate to succinyl-CoA and CO(2). The 2-oxoglutarate dehydrogenase complex is mainly active in the mitochondrion. A fraction of the 2-oxoglutarate dehydrogenase complex also localizes in the nucleus and is required for lysine succinylation of histones: associates with KAT2A on chromatin and provides succinyl-CoA to histone succinyltransferase KAT2A. The polypeptide is Dihydrolipoyllysine-residue succinyltransferase component of 2-oxoglutarate dehydrogenase complex, mitochondrial (Mus musculus (Mouse)).